Here is a 122-residue protein sequence, read N- to C-terminus: MKKKDTCEIFCYDEEKVNRIQGDLQTVDISGVSQILKAIADENRAKITYALCQDEELCVCDIANILGVTIANASHHLRTLYKQGVVNFRKEGKLALYSLGDEHIRQIMMIALAHKKEVKVNV.

Residues Cys7, Cys11, Cys58, and Cys60 each contribute to the Cd(2+) site. Residues 24–119 (LQTVDISGVS…IALAHKKEVK (96 aa)) form the HTH arsR-type domain. The segment at residues 59–78 (VCDIANILGVTIANASHHLR) is a DNA-binding region (H-T-H motif). Zn(2+) contacts are provided by Asp101, His103, His114, and Glu117.

In terms of assembly, homodimer.

Its function is as follows. Metal-binding repressor for the cad operon. Involved in resistance to heavy metals, such as cadmium, bismuth, zinc or lead. Binds 2 metal ions per subunit. Metal binding to the N-terminal regulatory site causes the repressor to dissociate from the DNA. This is Cadmium resistance transcriptional regulatory protein CadC (cadC) from Staphylococcus aureus.